The chain runs to 318 residues: Aspartate carbamoyltransferase catalytic subunit (318 aa).

R55 and T56 together coordinate carbamoyl phosphate. K83 contributes to the L-aspartate binding site. R105, H138, and Q141 together coordinate carbamoyl phosphate. The L-aspartate site is built by R171 and R225. Carbamoyl phosphate contacts are provided by G266 and P267.

It belongs to the aspartate/ornithine carbamoyltransferase superfamily. ATCase family. Heterododecamer (2C3:3R2) of six catalytic PyrB chains organized as two trimers (C3), and six regulatory PyrI chains organized as three dimers (R2).

It catalyses the reaction carbamoyl phosphate + L-aspartate = N-carbamoyl-L-aspartate + phosphate + H(+). Its pathway is pyrimidine metabolism; UMP biosynthesis via de novo pathway; (S)-dihydroorotate from bicarbonate: step 2/3. Catalyzes the condensation of carbamoyl phosphate and aspartate to form carbamoyl aspartate and inorganic phosphate, the committed step in the de novo pyrimidine nucleotide biosynthesis pathway. The protein is Aspartate carbamoyltransferase catalytic subunit of Corynebacterium kroppenstedtii (strain DSM 44385 / JCM 11950 / CIP 105744 / CCUG 35717).